The following is a 198-amino-acid chain: ATP-dependent Clp protease proteolytic subunit (198 aa).

S98 (nucleophile) is an active-site residue. H123 is a catalytic residue.

The protein belongs to the peptidase S14 family. As to quaternary structure, fourteen ClpP subunits assemble into 2 heptameric rings which stack back to back to give a disk-like structure with a central cavity, resembling the structure of eukaryotic proteasomes.

The protein localises to the cytoplasm. The catalysed reaction is Hydrolysis of proteins to small peptides in the presence of ATP and magnesium. alpha-casein is the usual test substrate. In the absence of ATP, only oligopeptides shorter than five residues are hydrolyzed (such as succinyl-Leu-Tyr-|-NHMec, and Leu-Tyr-Leu-|-Tyr-Trp, in which cleavage of the -Tyr-|-Leu- and -Tyr-|-Trp bonds also occurs).. Functionally, cleaves peptides in various proteins in a process that requires ATP hydrolysis. Has a chymotrypsin-like activity. Plays a major role in the degradation of misfolded proteins. The protein is ATP-dependent Clp protease proteolytic subunit of Bacillus velezensis (strain DSM 23117 / BGSC 10A6 / LMG 26770 / FZB42) (Bacillus amyloliquefaciens subsp. plantarum).